We begin with the raw amino-acid sequence, 532 residues long: Probable cytochrome c oxidase subunit 1 (532 aa).

8 helical membrane-spanning segments follow: residues 33 to 53 (IMYI…SLLF), 74 to 94 (VLIT…ALFG), 95 to 115 (GFGN…FPRL), 118 to 138 (ISFW…FVDG), 163 to 183 (MAIF…INLI), 200 to 220 (PLFV…MPVL), 252 to 272 (LFWF…FGIV), and 284 to 304 (IFGY…GFIV). His-79 lines the Fe(II)-heme a pocket. 2 residues coordinate Cu cation: His-258 and Tyr-262. Cu cation-binding residues include His-307 and His-308. The next 2 membrane-spanning stretches (helical) occupy residues 318-338 (ALIY…IKIF) and 355-375 (MLFS…GIIL). Residue His-393 participates in heme a3 binding. 3 helical membrane passes run 394–414 (FHYT…YYWF), 431–451 (FWIT…LGLA), and 473–493 (IGAG…FYTL). Position 395 (His-395) interacts with Fe(II)-heme a.

Belongs to the heme-copper respiratory oxidase family.

The protein resides in the cell membrane. The catalysed reaction is 4 Fe(II)-[cytochrome c] + O2 + 8 H(+)(in) = 4 Fe(III)-[cytochrome c] + 2 H2O + 4 H(+)(out). The protein operates within energy metabolism; oxidative phosphorylation. Functionally, cytochrome c oxidase is the component of the respiratory chain that catalyzes the reduction of oxygen to water. Subunits 1-3 form the functional core of the enzyme complex. CO I is the catalytic subunit of the enzyme. Electrons originating in cytochrome c are transferred via the copper A center of subunit 2 and heme A of subunit 1 to the bimetallic center formed by heme A3 and copper B. In Rickettsia bellii (strain RML369-C), this protein is Probable cytochrome c oxidase subunit 1 (ctaD).